The sequence spans 102 residues: Small ribosomal subunit protein uS10 (102 aa).

This sequence belongs to the universal ribosomal protein uS10 family. As to quaternary structure, part of the 30S ribosomal subunit.

Its function is as follows. Involved in the binding of tRNA to the ribosomes. The protein is Small ribosomal subunit protein uS10 of Pelotomaculum thermopropionicum (strain DSM 13744 / JCM 10971 / SI).